Consider the following 77-residue polypeptide: Translation initiation factor IF-1, chloroplastic (77 aa).

The S1-like domain maps to 1 to 71 (MKEQKLIHEG…TKGRIIYRLR (71 aa)).

It belongs to the IF-1 family. As to quaternary structure, component of the 30S ribosomal translation pre-initiation complex which assembles on the 30S ribosome in the order IF-2 and IF-3, IF-1 and N-formylmethionyl-tRNA(fMet); mRNA recruitment can occur at any time during PIC assembly.

It localises to the plastid. Its subcellular location is the chloroplast. Functionally, one of the essential components for the initiation of protein synthesis. Stabilizes the binding of IF-2 and IF-3 on the 30S subunit to which N-formylmethionyl-tRNA(fMet) subsequently binds. Helps modulate mRNA selection, yielding the 30S pre-initiation complex (PIC). Upon addition of the 50S ribosomal subunit IF-1, IF-2 and IF-3 are released leaving the mature 70S translation initiation complex. This Dioscorea elephantipes (Elephant's foot yam) protein is Translation initiation factor IF-1, chloroplastic.